A 462-amino-acid chain; its full sequence is Cytochrome P450 20A1 (462 aa).

A helical membrane pass occupies residues 4-24 (FAIFAVTFLLALVGAVLYLYP). Cysteine 409 provides a ligand contact to heme.

It belongs to the cytochrome P450 family. The cofactor is heme.

Its subcellular location is the membrane. The polypeptide is Cytochrome P450 20A1 (CYP20A1) (Bos taurus (Bovine)).